We begin with the raw amino-acid sequence, 333 residues long: Phosphate acyltransferase (333 aa).

The protein belongs to the PlsX family. In terms of assembly, homodimer. Probably interacts with PlsY.

The protein resides in the cytoplasm. It carries out the reaction a fatty acyl-[ACP] + phosphate = an acyl phosphate + holo-[ACP]. The protein operates within lipid metabolism; phospholipid metabolism. In terms of biological role, catalyzes the reversible formation of acyl-phosphate (acyl-PO(4)) from acyl-[acyl-carrier-protein] (acyl-ACP). This enzyme utilizes acyl-ACP as fatty acyl donor, but not acyl-CoA. In Lactobacillus helveticus (strain DPC 4571), this protein is Phosphate acyltransferase.